Consider the following 212-residue polypeptide: Translation initiation factor IF-3 (212 aa).

The protein belongs to the IF-3 family. Monomer.

Its subcellular location is the cytoplasm. Its function is as follows. IF-3 binds to the 30S ribosomal subunit and shifts the equilibrium between 70S ribosomes and their 50S and 30S subunits in favor of the free subunits, thus enhancing the availability of 30S subunits on which protein synthesis initiation begins. The protein is Translation initiation factor IF-3 of Synechococcus sp. (strain CC9311).